The primary structure comprises 149 residues: D-aminoacyl-tRNA deacylase (149 aa).

Residues 137–138 carry the Gly-cisPro motif, important for rejection of L-amino acids motif; the sequence is GP.

It belongs to the DTD family. As to quaternary structure, homodimer.

The protein resides in the cytoplasm. It carries out the reaction glycyl-tRNA(Ala) + H2O = tRNA(Ala) + glycine + H(+). The catalysed reaction is a D-aminoacyl-tRNA + H2O = a tRNA + a D-alpha-amino acid + H(+). An aminoacyl-tRNA editing enzyme that deacylates mischarged D-aminoacyl-tRNAs. Also deacylates mischarged glycyl-tRNA(Ala), protecting cells against glycine mischarging by AlaRS. Acts via tRNA-based rather than protein-based catalysis; rejects L-amino acids rather than detecting D-amino acids in the active site. By recycling D-aminoacyl-tRNA to D-amino acids and free tRNA molecules, this enzyme counteracts the toxicity associated with the formation of D-aminoacyl-tRNA entities in vivo and helps enforce protein L-homochirality. This chain is D-aminoacyl-tRNA deacylase, found in Herminiimonas arsenicoxydans.